The chain runs to 357 residues: Protein-glutamate methylesterase/protein-glutamine glutaminase (357 aa).

One can recognise a Response regulatory domain in the interval 3 to 120 (RVLVVDDSAF…SLDLYKIKEQ (118 aa)). 4-aspartylphosphate is present on D54. The CheB-type methylesterase domain maps to 161–355 (PGTGRQIVCI…ASITSCVKKE (195 aa)). Residues S173, H200, and D296 contribute to the active site.

Belongs to the CheB family. Post-translationally, phosphorylated by CheA. Phosphorylation of the N-terminal regulatory domain activates the methylesterase activity.

It is found in the cytoplasm. It carries out the reaction [protein]-L-glutamate 5-O-methyl ester + H2O = L-glutamyl-[protein] + methanol + H(+). The enzyme catalyses L-glutaminyl-[protein] + H2O = L-glutamyl-[protein] + NH4(+). Its function is as follows. Involved in the modulation of the chemotaxis system; catalyzes the demethylation of specific methylglutamate residues introduced into the chemoreceptors (methyl-accepting chemotaxis proteins) by CheR. B.subtilis has an effective methylation-independent adaptation system but must utilize the methylation system for adaptation to high concentrations of attractant. This chain is Protein-glutamate methylesterase/protein-glutamine glutaminase, found in Bacillus subtilis (strain 168).